The following is a 401-amino-acid chain: Ureide permease 4 (401 aa).

Residues 1 to 10 are Extracellular-facing; that stretch reads MYVVESKAGA. A helical membrane pass occupies residues 11-31; that stretch reads IGCMILSLCCLGSWPAILTLL. Topologically, residues 32–40 are cytoplasmic; it reads ERRGRLPQH. The helical transmembrane segment at 41 to 61 threads the bilayer; sequence TFLDFATANLLAAIVIAFSLG. The Extracellular portion of the chain corresponds to 62 to 81; it reads EIGKSTFLKPDFTTQLPQDN. The chain crosses the membrane as a helical span at residues 82–102; sequence WPSVLLAVAGGVLLSIGNLAT. Residues 103 to 104 lie on the Cytoplasmic side of the membrane; the sequence is QY. The helical transmembrane segment at 105–125 threads the bilayer; the sequence is AFAFVGLSVTEVITASITVVI. Residues 126–141 lie on the Extracellular side of the membrane; it reads GTTLNYFLDNKINKAE. Residues 142–162 traverse the membrane as a helical segment; that stretch reads ILFPGVGCFLIAVFLGAAVHA. At 163-231 the chain is on the cytoplasmic side; the sequence is SNAADVKEKL…KRAIKVFGKS (69 aa). 224–231 serves as a coordination point for ATP; it reads AIKVFGKS. Residues 232-252 traverse the membrane as a helical segment; the sequence is IMIGLFITLFAGISLSLFSPA. The Extracellular portion of the chain corresponds to 253–275; that stretch reads FNLATNDQWSTLPKGVPKLVVYT. The chain crosses the membrane as a helical span at residues 276–296; sequence AFFYFSIAGFLISLILNLIFL. Residues 297–318 are Cytoplasmic-facing; sequence YRPMVGLARSSLKKYIYDSKGR. The chain crosses the membrane as a helical span at residues 319-339; the sequence is GWAVFAGFLCGFGNGLQFMGG. At 340–344 the chain is on the extracellular side; that stretch reads QAAGY. The helical transmembrane segment at 345 to 365 threads the bilayer; the sequence is AAADSVQALPLVSTFWGIVLF. The Cytoplasmic portion of the chain corresponds to 366–374; it reads GEYRKSSKR. Residues 375 to 395 form a helical membrane-spanning segment; the sequence is TYALLVSMLAMFVAAVAILMA. The Extracellular portion of the chain corresponds to 396-401; sequence SSGHRK.

This sequence belongs to the plant ureide permease (TC 2.A.7.19) family. Expressed in developing seedlings, flower filaments and stigma, and the top and bottom parts of carpels in siliques.

The protein resides in the membrane. Functionally, proton-coupled transporter that transports a wide spectrum of oxo derivatives of heterocyclic nitrogen compounds. This Arabidopsis thaliana (Mouse-ear cress) protein is Ureide permease 4.